A 132-amino-acid chain; its full sequence is Hemoglobin heart muscle subunit alpha-type (132 aa).

Residues 1–132 (GLSDSEKSAV…GEVGAILTSS (132 aa)) enclose the Globin domain. Positions 58 and 83 each coordinate heme b.

This sequence belongs to the globin family. Monomer.

Functionally, this hemoglobin may replace myocardial myoglobin in this amphibian species. In Aquarana catesbeiana (American bullfrog), this protein is Hemoglobin heart muscle subunit alpha-type.